A 215-amino-acid chain; its full sequence is Transmembrane protein 267 (215 aa).

The next 3 membrane-spanning stretches (helical) occupy residues 77–97 (FGEI…HFLL), 114–134 (FLHC…TMHF), and 178–198 (FWLY…VMYF).

Its subcellular location is the membrane. The polypeptide is Transmembrane protein 267 (TMEM267) (Bos taurus (Bovine)).